The primary structure comprises 36 residues: Potassium channel toxin alpha-KTx 11.3 (36 aa).

Intrachain disulfides connect Cys8–Cys27, Cys13–Cys33, and Cys17–Cys35.

The protein belongs to the short scorpion toxin superfamily. Potassium channel inhibitor family. Alpha-KTx 11 subfamily. As to expression, expressed by the venom gland.

The protein resides in the secreted. In terms of biological role, binds and inhibits voltage-sensitive potassium channels. Inhibits the vertebrate potassium channel Kv1.1/KCNA1 with low affinity. The chain is Potassium channel toxin alpha-KTx 11.3 from Parabuthus granulatus (Granulated thick-tailed scorpion).